The chain runs to 21 residues: Mast cell protease 3 (21 aa).

The 21-residue stretch at 1-21 folds into the Peptidase S1 domain; the sequence is IIGGVESRPHSRPYMATLEIT. Residues 1–21 are disordered; sequence IIGGVESRPHSRPYMATLEIT.

This sequence belongs to the peptidase S1 family. Granzyme subfamily.

Its function is as follows. Thrombin inactivating protease. Displays chymotrypsin-like substrate specificity. The sequence is that of Mast cell protease 3 (Mcpt3) from Mus musculus (Mouse).